The sequence spans 145 residues: Large ribosomal subunit protein uL11 (145 aa).

Belongs to the universal ribosomal protein uL11 family. In terms of assembly, part of the ribosomal stalk of the 50S ribosomal subunit. Interacts with L10 and the large rRNA to form the base of the stalk. L10 forms an elongated spine to which L12 dimers bind in a sequential fashion forming a multimeric L10(L12)X complex. Post-translationally, one or more lysine residues are methylated.

Forms part of the ribosomal stalk which helps the ribosome interact with GTP-bound translation factors. The protein is Large ribosomal subunit protein uL11 of Rickettsia canadensis (strain McKiel).